Consider the following 657-residue polypeptide: uncharacterized protein (657 aa).

Active-site charge relay system residues include Ser-518 and His-631.

The protein belongs to the peptidase S9C family.

This is an uncharacterized protein from Bacillus subtilis (strain 168).